The primary structure comprises 1054 residues: Disks large-associated protein 2 (1054 aa).

2 disordered regions span residues 32 to 87 (EPEE…SGSR) and 242 to 301 (SHSL…SDDN). Residues 242 to 255 (SHSLEGSSKSNANG) show a composition bias toward polar residues. The span at 267–281 (HAHHAKHSKRSKSKE) shows a compositional bias: basic residues. Residues 289–299 (RPGMSSWWSSD) show a composition bias toward low complexity. Residues serine 298, serine 304, serine 386, and serine 452 each carry the phosphoserine modification. 2 disordered regions span residues 442 to 464 (GDEESGESDSSPKTSPKSAILPE) and 609 to 666 (YKKT…TDSL). Over residues 628–641 (VTAQSSTESTQDAY) the composition is skewed to polar residues. 4 positions are modified to phosphoserine: serine 662, serine 665, serine 668, and serine 715. Positions 719–746 (QDSEFPEHQPYPRSDVETATDSDTESRG) are disordered. Phosphothreonine is present on threonine 738. 5 positions are modified to phosphoserine: serine 740, serine 771, serine 806, serine 978, and serine 1007. Composition is skewed to basic and acidic residues over residues 977-987 (ESPERKEERKV) and 1002-1020 (ITREKSLDLPDRQRQEARR). The segment at 977–1021 (ESPERKEERKVPPPIPKKPPKGKFPITREKSLDLPDRQRQEARRR) is disordered.

It belongs to the SAPAP family. As to quaternary structure, interacts with DLG1 and DLG4/PSD-95. In terms of tissue distribution, expressed in brain and kidney.

The protein localises to the cell membrane. The protein resides in the postsynaptic density. Its subcellular location is the synapse. Its function is as follows. May play a role in the molecular organization of synapses and neuronal cell signaling. Could be an adapter protein linking ion channel to the subsynaptic cytoskeleton. May induce enrichment of PSD-95/SAP90 at the plasma membrane. The sequence is that of Disks large-associated protein 2 from Homo sapiens (Human).